We begin with the raw amino-acid sequence, 445 residues long: Serine protease inhibitor A3F (445 aa).

N-linked (GlcNAc...) asparagine glycans are attached at residues N28, N94, N174, and N259. The tract at residues 357-382 (GTEAAAGTGYQNLQCCQGVIYSMKIY) is RCL.

The protein belongs to the serpin family.

This is Serine protease inhibitor A3F (Serpina3f) from Mus musculus (Mouse).